We begin with the raw amino-acid sequence, 124 residues long: Small ribosomal subunit protein eS8 (124 aa).

Basic residues predominate over residues 1-22 (MQYQGRSKRSKTGARLRPRSKK). 2 disordered regions span residues 1–40 (MQYQGRSKRSKTGARLRPRSKKSKSELGREPTETTVGEPR) and 102–124 (AGTARVTSRPGQDGQVNATRVDE). Over residues 23-32 (SKSELGREPT) the composition is skewed to basic and acidic residues. Residues 106–124 (RVTSRPGQDGQVNATRVDE) are compositionally biased toward polar residues.

Belongs to the eukaryotic ribosomal protein eS8 family. As to quaternary structure, part of the 30S ribosomal subunit.

The sequence is that of Small ribosomal subunit protein eS8 from Halobacterium salinarum (strain ATCC 29341 / DSM 671 / R1).